The sequence spans 327 residues: Glycoprotein integral membrane protein 1 (327 aa).

An N-terminal signal peptide occupies residues methionine 1–glycine 23. At tryptophan 24 to proline 259 the chain is on the extracellular side. Asparagine 44, asparagine 62, and asparagine 146 each carry an N-linked (GlcNAc...) asparagine glycan. The helical transmembrane segment at valine 260–alanine 280 threads the bilayer. Residues valine 281–isoleucine 327 lie on the Cytoplasmic side of the membrane.

It is found in the membrane. The sequence is that of Glycoprotein integral membrane protein 1 (Ginm1) from Mus musculus (Mouse).